We begin with the raw amino-acid sequence, 139 residues long: NADPH-dependent 7-cyano-7-deazaguanine reductase (139 aa).

Catalysis depends on Cys-34, which acts as the Thioimide intermediate. The active-site Proton donor is the Asp-41. Residues 56 to 58 (VEL) and 75 to 76 (HE) each bind substrate.

This sequence belongs to the GTP cyclohydrolase I family. QueF type 1 subfamily.

It localises to the cytoplasm. The enzyme catalyses 7-aminomethyl-7-carbaguanine + 2 NADP(+) = 7-cyano-7-deazaguanine + 2 NADPH + 3 H(+). The protein operates within tRNA modification; tRNA-queuosine biosynthesis. Catalyzes the NADPH-dependent reduction of 7-cyano-7-deazaguanine (preQ0) to 7-aminomethyl-7-deazaguanine (preQ1). The sequence is that of NADPH-dependent 7-cyano-7-deazaguanine reductase from Nitrosospira multiformis (strain ATCC 25196 / NCIMB 11849 / C 71).